The chain runs to 184 residues: Glutathione-regulated potassium-efflux system ancillary protein KefG (184 aa).

Belongs to the NAD(P)H dehydrogenase (quinone) family. KefG subfamily. As to quaternary structure, interacts with KefB.

The protein resides in the cell inner membrane. The catalysed reaction is a quinone + NADH + H(+) = a quinol + NAD(+). It catalyses the reaction a quinone + NADPH + H(+) = a quinol + NADP(+). Its function is as follows. Regulatory subunit of a potassium efflux system that confers protection against electrophiles. Required for full activity of KefB. The chain is Glutathione-regulated potassium-efflux system ancillary protein KefG from Shigella dysenteriae serotype 1 (strain Sd197).